The sequence spans 139 residues: MRAQAAFPKAARLLKTDEFSSVFRLRPWRRTAHFVVYGRPTGNEARLGLVIGKKYAPRAATRNLVRRIAREAFRLRRAEFGGWDVLLRLHTRFDKKALPSASSPPLRALCRSEIEALLDKAAREVTRREAPPAEAPKTE.

It belongs to the RnpA family. Consists of a catalytic RNA component (M1 or rnpB) and a protein subunit.

It catalyses the reaction Endonucleolytic cleavage of RNA, removing 5'-extranucleotides from tRNA precursor.. Its function is as follows. RNaseP catalyzes the removal of the 5'-leader sequence from pre-tRNA to produce the mature 5'-terminus. It can also cleave other RNA substrates such as 4.5S RNA. The protein component plays an auxiliary but essential role in vivo by binding to the 5'-leader sequence and broadening the substrate specificity of the ribozyme. The protein is Ribonuclease P protein component of Paraburkholderia xenovorans (strain LB400).